The sequence spans 342 residues: Phenylalanine--tRNA ligase alpha subunit (342 aa).

Residue glutamate 260 coordinates Mg(2+).

This sequence belongs to the class-II aminoacyl-tRNA synthetase family. Phe-tRNA synthetase alpha subunit type 1 subfamily. Tetramer of two alpha and two beta subunits. The cofactor is Mg(2+).

The protein localises to the cytoplasm. The enzyme catalyses tRNA(Phe) + L-phenylalanine + ATP = L-phenylalanyl-tRNA(Phe) + AMP + diphosphate + H(+). In Nocardia farcinica (strain IFM 10152), this protein is Phenylalanine--tRNA ligase alpha subunit.